We begin with the raw amino-acid sequence, 341 residues long: Nicotinate-nucleotide--dimethylbenzimidazole phosphoribosyltransferase (341 aa).

The Proton acceptor role is filled by Glu306.

It belongs to the CobT family.

It carries out the reaction 5,6-dimethylbenzimidazole + nicotinate beta-D-ribonucleotide = alpha-ribazole 5'-phosphate + nicotinate + H(+). The protein operates within nucleoside biosynthesis; alpha-ribazole biosynthesis; alpha-ribazole from 5,6-dimethylbenzimidazole: step 1/2. Functionally, catalyzes the synthesis of alpha-ribazole-5'-phosphate from nicotinate mononucleotide (NAMN) and 5,6-dimethylbenzimidazole (DMB). The protein is Nicotinate-nucleotide--dimethylbenzimidazole phosphoribosyltransferase of Methylocella silvestris (strain DSM 15510 / CIP 108128 / LMG 27833 / NCIMB 13906 / BL2).